The chain runs to 80 residues: Exodeoxyribonuclease 7 small subunit (80 aa).

It belongs to the XseB family. Heterooligomer composed of large and small subunits.

It localises to the cytoplasm. It carries out the reaction Exonucleolytic cleavage in either 5'- to 3'- or 3'- to 5'-direction to yield nucleoside 5'-phosphates.. Its function is as follows. Bidirectionally degrades single-stranded DNA into large acid-insoluble oligonucleotides, which are then degraded further into small acid-soluble oligonucleotides. The polypeptide is Exodeoxyribonuclease 7 small subunit (Klebsiella pneumoniae (strain 342)).